Reading from the N-terminus, the 351-residue chain is Fe(3+) ions import ATP-binding protein FbpC (351 aa).

The region spanning 7-241 is the ABC transporter domain; that stretch reads LTVKNLNKFF…PNHLETAKFM (235 aa). 39–46 serves as a coordination point for ATP; the sequence is GASGCGKT.

The protein belongs to the ABC transporter superfamily. Fe(3+) ion importer (TC 3.A.1.10) family. As to quaternary structure, the complex is composed of two ATP-binding proteins (FbpC), two transmembrane proteins (FbpB) and a solute-binding protein (FbpA).

The protein localises to the cell inner membrane. It carries out the reaction Fe(3+)(out) + ATP + H2O = Fe(3+)(in) + ADP + phosphate + H(+). Its function is as follows. Part of the ABC transporter complex FbpABC involved in Fe(3+) ions import. Responsible for energy coupling to the transport system. The protein is Fe(3+) ions import ATP-binding protein FbpC of Haemophilus influenzae (strain 86-028NP).